The following is a 242-amino-acid chain: Large ribosomal subunit protein uL30x (242 aa).

This sequence belongs to the universal ribosomal protein uL30 family.

The sequence is that of Large ribosomal subunit protein uL30x (RPL7C) from Arabidopsis thaliana (Mouse-ear cress).